A 121-amino-acid polypeptide reads, in one-letter code: Large ribosomal subunit protein bL20 (121 aa).

It belongs to the bacterial ribosomal protein bL20 family.

Binds directly to 23S ribosomal RNA and is necessary for the in vitro assembly process of the 50S ribosomal subunit. It is not involved in the protein synthesizing functions of that subunit. The polypeptide is Large ribosomal subunit protein bL20 (Orientia tsutsugamushi (strain Ikeda) (Rickettsia tsutsugamushi)).